Here is a 258-residue protein sequence, read N- to C-terminus: TLC domain-containing protein 4 A (258 aa).

7 helical membrane passes run Tyr8–Ile28, Ile49–Cys71, Phe92–Tyr112, Trp118–Tyr138, Leu144–Phe164, Leu170–Ile190, and Ile217–Ile237. Residues Ser46–Ser245 form the TLC domain.

Belongs to the TLCD4 family.

It localises to the membrane. This Dictyostelium discoideum (Social amoeba) protein is TLC domain-containing protein 4 A (tlcd4a).